The primary structure comprises 275 residues: Diaminopimelate epimerase (275 aa).

Residues asparagine 20 and asparagine 63 each contribute to the substrate site. Cysteine 72 serves as the catalytic Proton donor. Residues glycine 73 to asparagine 74, asparagine 179, and glutamate 197 to arginine 198 each bind substrate. Cysteine 207 serves as the catalytic Proton acceptor. Glycine 208 to threonine 209 contributes to the substrate binding site.

It belongs to the diaminopimelate epimerase family. Homodimer.

Its subcellular location is the cytoplasm. It carries out the reaction (2S,6S)-2,6-diaminopimelate = meso-2,6-diaminopimelate. It participates in amino-acid biosynthesis; L-lysine biosynthesis via DAP pathway; DL-2,6-diaminopimelate from LL-2,6-diaminopimelate: step 1/1. Functionally, catalyzes the stereoinversion of LL-2,6-diaminopimelate (L,L-DAP) to meso-diaminopimelate (meso-DAP), a precursor of L-lysine and an essential component of the bacterial peptidoglycan. This is Diaminopimelate epimerase from Chlamydia trachomatis serovar L2 (strain ATCC VR-902B / DSM 19102 / 434/Bu).